Reading from the N-terminus, the 409-residue chain is MHLQRALVVLALLNFATVSLSMSTCTTLDFDHIKRKRVEAIRGQILSKLRLTSPPDPSMLANIPTQVLDLYNSTRELLEEVHGERGDDCTQENTESEYYAKEIYKFDMIQGLEEHNDLAVCPKGITSKIFRFNVSSVEKNETNLFRAEFRVLRMPNPSSKRSEQRIELFQILQPDEHIAKQRYIDGKNLPTRGAAEWLSFDVTDTVREWLLRRESNLGLEISIHCPCHTFQPNGDILENIQEVMEIKFKGVDSEDDPGRGDLGRLKKKKEHSPHLILMMIPPDRLDNPGLGAQRKKRALDTNYCFRNLEENCCVRPLYIDFRQDLGWKWVHEPKGYYANFCSGPCPYLRSADTTHSSVLGLYNTLNPEASASPCCVPQDLEPLTILYYVGRTAKVEQLSNMVVKSCKCS.

Positions 1–21 (MHLQRALVVLALLNFATVSLS) are cleaved as a signal peptide. N-linked (GlcNAc...) asparagine glycosylation is found at N72, N133, and N140. The short motif at 259 to 261 (RGD) is the Cell attachment site element. Cystine bridges form between C304/C313, C312/C375, C341/C406, and C345/C408.

It belongs to the TGF-beta family. As to quaternary structure, interacts with ASPN. Latency-associated peptide: Homodimer; disulfide-linked. Latency-associated peptide: Interacts with Transforming growth factor beta-3 (TGF-beta-3) chain; interaction is non-covalent and maintains (TGF-beta-3) in a latent state. Latency-associated peptide: Interacts with LRRC32/GARP; leading to regulate activation of TGF-beta-3 and promote epithelial fusion during palate development. Latency-associated peptide: Interacts (via cell attachment site) with integrins, leading to release of the active TGF-beta-3. Transforming growth factor beta-3: Homodimer; disulfide-linked. Transforming growth factor beta-3: Interacts with TGF-beta receptors (TGFBR1 and TGFBR2), leading to signal transduction. Transforming growth factor beta-3 proprotein: The precursor proprotein is cleaved in the Golgi apparatus to form Transforming growth factor beta-3 (TGF-beta-3) and Latency-associated peptide (LAP) chains, which remain non-covalently linked, rendering TGF-beta-3 inactive.

It is found in the secreted. The protein localises to the extracellular space. Its subcellular location is the extracellular matrix. In terms of biological role, transforming growth factor beta-3 proprotein: Precursor of the Latency-associated peptide (LAP) and Transforming growth factor beta-3 (TGF-beta-3) chains, which constitute the regulatory and active subunit of TGF-beta-3, respectively. Required to maintain the Transforming growth factor beta-3 (TGF-beta-3) chain in a latent state during storage in extracellular matrix. Associates non-covalently with TGF-beta-3 and regulates its activation via interaction with 'milieu molecules', such as LTBP1 and LRRC32/GARP, that control activation of TGF-beta-3. Interaction with integrins results in distortion of the Latency-associated peptide chain and subsequent release of the active TGF-beta-3. Its function is as follows. Transforming growth factor beta-3: Multifunctional protein that regulates embryogenesis and cell differentiation and is required in various processes such as secondary palate development. Activation into mature form follows different steps: following cleavage of the proprotein in the Golgi apparatus, Latency-associated peptide (LAP) and Transforming growth factor beta-3 (TGF-beta-3) chains remain non-covalently linked rendering TGF-beta-3 inactive during storage in extracellular matrix. At the same time, LAP chain interacts with 'milieu molecules', such as LTBP1 and LRRC32/GARP that control activation of TGF-beta-3 and maintain it in a latent state during storage in extracellular milieus. TGF-beta-3 is released from LAP by integrins: integrin-binding results in distortion of the LAP chain and subsequent release of the active TGF-beta-3. Once activated following release of LAP, TGF-beta-3 acts by binding to TGF-beta receptors (TGFBR1 and TGFBR2), which transduce signal. This chain is Transforming growth factor beta-3 proprotein (TGFB3), found in Sus scrofa (Pig).